The sequence spans 76 residues: DNA-directed RNA polymerase subunit epsilon (76 aa).

Belongs to the RNA polymerase subunit epsilon family. RNAP is composed of a core of 2 alpha, a beta and a beta' subunit. The core is associated with a delta subunit, and at least one of epsilon or omega. When a sigma factor is associated with the core the holoenzyme is formed, which can initiate transcription.

It catalyses the reaction RNA(n) + a ribonucleoside 5'-triphosphate = RNA(n+1) + diphosphate. Functionally, a non-essential component of RNA polymerase (RNAP). The chain is DNA-directed RNA polymerase subunit epsilon from Streptococcus equi subsp. zooepidemicus (strain H70).